The sequence spans 420 residues: ATP phosphoribosyltransferase regulatory subunit (420 aa).

It belongs to the class-II aminoacyl-tRNA synthetase family. HisZ subfamily. As to quaternary structure, heteromultimer composed of HisG and HisZ subunits.

The protein resides in the cytoplasm. Its pathway is amino-acid biosynthesis; L-histidine biosynthesis; L-histidine from 5-phospho-alpha-D-ribose 1-diphosphate: step 1/9. Its function is as follows. Required for the first step of histidine biosynthesis. May allow the feedback regulation of ATP phosphoribosyltransferase activity by histidine. The polypeptide is ATP phosphoribosyltransferase regulatory subunit (Bacillus cereus (strain ATCC 10987 / NRS 248)).